The following is a 405-amino-acid chain: Venom serine protease 34 (405 aa).

The first 35 residues, 1 to 35 (MIFTNNIAAFQNVVLVKKVKIVLLIFYGSIMFSMT), serve as a signal peptide directing secretion. 2 disulfides stabilise this stretch: C42/C70 and C95/C111. The CUB domain maps to 42-147 (CDYYQNLNLG…EVRPIKRVKD (106 aa)). N113 carries an N-linked (GlcNAc...) asparagine glycan. Residues 161-397 (IVGGTNTGIN…YIDWIVSQTP (237 aa)) form the Peptidase S1 domain. C188 and C204 are oxidised to a cystine. The active-site Charge relay system is H203. 2 N-linked (GlcNAc...) asparagine glycosylation sites follow: N209 and N229. D257 acts as the Charge relay system in catalysis. Cystine bridges form between C323/C336 and C345/C375. S349 serves as the catalytic Charge relay system.

The protein belongs to the peptidase S1 family. Expressed by the venom duct.

It localises to the secreted. The sequence is that of Venom serine protease 34 from Apis mellifera (Honeybee).